Consider the following 104-residue polypeptide: Thioredoxin (104 aa).

The Thioredoxin domain maps to 2-104; sequence AIVKATDQSF…ALQELVNKHL (103 aa). Cys29 and Cys32 are oxidised to a cystine.

It belongs to the thioredoxin family.

Its function is as follows. Participates in various redox reactions through the reversible oxidation of its active center dithiol to a disulfide and catalyzes dithiol-disulfide exchange reactions. In Bacillus subtilis (strain 168), this protein is Thioredoxin (trxA).